The following is a 152-amino-acid chain: SsrA-binding protein (152 aa).

It belongs to the SmpB family.

It is found in the cytoplasm. Required for rescue of stalled ribosomes mediated by trans-translation. Binds to transfer-messenger RNA (tmRNA), required for stable association of tmRNA with ribosomes. tmRNA and SmpB together mimic tRNA shape, replacing the anticodon stem-loop with SmpB. tmRNA is encoded by the ssrA gene; the 2 termini fold to resemble tRNA(Ala) and it encodes a 'tag peptide', a short internal open reading frame. During trans-translation Ala-aminoacylated tmRNA acts like a tRNA, entering the A-site of stalled ribosomes, displacing the stalled mRNA. The ribosome then switches to translate the ORF on the tmRNA; the nascent peptide is terminated with the 'tag peptide' encoded by the tmRNA and targeted for degradation. The ribosome is freed to recommence translation, which seems to be the essential function of trans-translation. In Rickettsia canadensis (strain McKiel), this protein is SsrA-binding protein.